The following is a 367-amino-acid chain: Aspartate beta-hydroxylase domain-containing protein 1 (367 aa).

The disordered stretch occupies residues 1 to 27 (MWRGSSAGGSQGAAMEGTGGELGGQGN). Over 1 to 49 (MWRGSSAGGSQGAAMEGTGGELGGQGNWGLEDAPGLLARASLPIMPAWP) the chain is Cytoplasmic. The chain crosses the membrane as a helical span at residues 50–72 (LPLASSALTLLLGALTSLFLWYC). Residues 73–367 (YRLGSQDMQA…ALDFVFAPDP (295 aa)) are Lumenal-facing. Residues 88–122 (RAGAVGGRPGGCSEAGRPSPGRSGESGEGPRTEGL) form a disordered region. Residue Ser-106 is modified to Phosphoserine.

This sequence belongs to the aspartyl/asparaginyl beta-hydroxylase family.

It localises to the membrane. This is Aspartate beta-hydroxylase domain-containing protein 1 (ASPHD1) from Bos taurus (Bovine).